Consider the following 359-residue polypeptide: Peptide chain release factor 1 (359 aa).

Gln236 is modified (N5-methylglutamine).

Belongs to the prokaryotic/mitochondrial release factor family. Methylated by PrmC. Methylation increases the termination efficiency of RF1.

It localises to the cytoplasm. Functionally, peptide chain release factor 1 directs the termination of translation in response to the peptide chain termination codons UAG and UAA. The polypeptide is Peptide chain release factor 1 (Streptococcus mutans serotype c (strain ATCC 700610 / UA159)).